The chain runs to 122 residues: Large ribosomal subunit protein uL14 (122 aa).

Belongs to the universal ribosomal protein uL14 family. As to quaternary structure, part of the 50S ribosomal subunit. Forms a cluster with proteins L3 and L19. In the 70S ribosome, L14 and L19 interact and together make contacts with the 16S rRNA in bridges B5 and B8.

Functionally, binds to 23S rRNA. Forms part of two intersubunit bridges in the 70S ribosome. The sequence is that of Large ribosomal subunit protein uL14 from Orientia tsutsugamushi (strain Boryong) (Rickettsia tsutsugamushi).